The chain runs to 502 residues: NAD(P)H-quinone oxidoreductase chain 4, chloroplastic (502 aa).

Transmembrane regions (helical) follow at residues 4 to 24 (FPWL…IFFF), 37 to 57 (ICIC…HFQL), 87 to 107 (VGPI…AWPV), 113 to 130 (LFHF…GLFS), 134 to 154 (LLLF…LLSM), 167 to 187 (FILY…GMGL), 208 to 228 (ALEI…LPII), 242 to 262 (HYST…YGLV), 272 to 292 (AHSI…IYAA), 305 to 325 (IAYS…SITD), 330 to 350 (GAIL…FLAG), 374 to 396 (IFTM…GFAA), 416 to 436 (ILIT…SLSM), and 464 to 484 (LFVS…PDFV).

This sequence belongs to the complex I subunit 4 family.

It localises to the plastid. The protein resides in the chloroplast thylakoid membrane. The enzyme catalyses a plastoquinone + NADH + (n+1) H(+)(in) = a plastoquinol + NAD(+) + n H(+)(out). It catalyses the reaction a plastoquinone + NADPH + (n+1) H(+)(in) = a plastoquinol + NADP(+) + n H(+)(out). The sequence is that of NAD(P)H-quinone oxidoreductase chain 4, chloroplastic from Ranunculus macranthus (Large buttercup).